Reading from the N-terminus, the 328-residue chain is GTPase Obg (328 aa).

The Obg domain maps to tyrosine 2 to valine 160. The OBG-type G domain occupies alanine 161–lysine 326. GTP is bound by residues glycine 167–serine 174, phenylalanine 192–isoleucine 196, aspartate 213–glycine 216, asparagine 280–aspartate 283, and serine 307–tyrosine 309. The Mg(2+) site is built by serine 174 and threonine 194.

Belongs to the TRAFAC class OBG-HflX-like GTPase superfamily. OBG GTPase family. Monomer. Mg(2+) is required as a cofactor.

It is found in the cytoplasm. An essential GTPase which binds GTP, GDP and possibly (p)ppGpp with moderate affinity, with high nucleotide exchange rates and a fairly low GTP hydrolysis rate. Plays a role in control of the cell cycle, stress response, ribosome biogenesis and in those bacteria that undergo differentiation, in morphogenesis control. The polypeptide is GTPase Obg (Borreliella burgdorferi (strain ATCC 35210 / DSM 4680 / CIP 102532 / B31) (Borrelia burgdorferi)).